The chain runs to 492 residues: Aspartate aminotransferase (492 aa).

The N-terminal 66 residues, 1-66 (MMSASFKCPV…KGSCCLFNIR (66 aa)), are a transit peptide targeting the chloroplast. Residues Gly119, Trp206, and Asn256 each contribute to the L-aspartate site. The residue at position 319 (Lys319) is an N6-(pyridoxal phosphate)lysine. Arg458 is a binding site for L-aspartate.

It belongs to the class-I pyridoxal-phosphate-dependent aminotransferase family. Homodimer. Requires pyridoxal 5'-phosphate as cofactor.

The protein localises to the plastid. The protein resides in the chloroplast. It carries out the reaction L-aspartate + 2-oxoglutarate = oxaloacetate + L-glutamate. Its function is as follows. Prokaryotic-type aspartate aminotransferase. Specific for aspartate and no activity with glutamine, asparagine, alanine, histidine, leucine, methionine, lysine, arginine, tryptophan, tyrosine, phenylalanine or kynurenine. The polypeptide is Aspartate aminotransferase (AAT) (Pinus pinaster (Maritime pine)).